The primary structure comprises 158 residues: Large ribosomal subunit protein uL15 (158 aa).

Disordered regions lie at residues 1-53 (MRIH…FEGG) and 138-158 (ESAGGSCQDLSDTSNAPSNNE). A compositionally biased stretch (gly residues) spans 23-35 (ISAGQGASGGFGM). Polar residues predominate over residues 145-158 (QDLSDTSNAPSNNE).

This sequence belongs to the universal ribosomal protein uL15 family. Part of the 50S ribosomal subunit.

In terms of biological role, binds to the 23S rRNA. The protein is Large ribosomal subunit protein uL15 of Crocosphaera subtropica (strain ATCC 51142 / BH68) (Cyanothece sp. (strain ATCC 51142)).